We begin with the raw amino-acid sequence, 1010 residues long: Translation initiation factor IF-2 (1010 aa).

2 disordered regions span residues 54–350 and 364–420; these read KGLA…FEDD and PSFT…RPES. Polar residues predominate over residues 57–70; it reads ASSTSKNSTGQRES. Pro residues predominate over residues 112-124; that stretch reads ISPPRPPVKPLVA. The span at 145 to 155 shows a compositional bias: polar residues; it reads HSPSVKETPTE. Basic and acidic residues predominate over residues 200–258; that stretch reads DRPRGEKRERGESENAPSPERRVGLAKPEKPTLNRKPDGKSPKLAEPAREVRETVELKR. Residues 378–389 show a composition bias toward low complexity; that stretch reads TAKAAPPGTPTA. The span at 406–419 shows a compositional bias: basic and acidic residues; it reads KSERQEPQEEKRPE. Residues 502–675 form the tr-type G domain; that stretch reads RRPPVVTIMG…LLVAEVEELV (174 aa). Positions 511 to 518 are G1; sequence GHVDHGKT. 511–518 is a binding site for GTP; it reads GHVDHGKT. The tract at residues 536-540 is G2; it reads GITQH. Residues 561–564 are G3; it reads DTPG. GTP-binding positions include 561-565 and 615-618; these read DTPGH and NKVD. The tract at residues 615 to 618 is G4; that stretch reads NKVD. Residues 651–653 are G5; that stretch reads SAL.

It belongs to the TRAFAC class translation factor GTPase superfamily. Classic translation factor GTPase family. IF-2 subfamily.

It localises to the cytoplasm. Functionally, one of the essential components for the initiation of protein synthesis. Protects formylmethionyl-tRNA from spontaneous hydrolysis and promotes its binding to the 30S ribosomal subunits. Also involved in the hydrolysis of GTP during the formation of the 70S ribosomal complex. The chain is Translation initiation factor IF-2 from Microcystis aeruginosa (strain NIES-843 / IAM M-2473).